The chain runs to 270 residues: Methylthioribulose-1-phosphate dehydratase (270 aa).

Residue C122 coordinates substrate. The Zn(2+) site is built by H140 and H142. E165 (proton donor/acceptor) is an active-site residue. H230 serves as a coordination point for Zn(2+).

Belongs to the aldolase class II family. MtnB subfamily. It depends on Zn(2+) as a cofactor.

Its subcellular location is the cytoplasm. It catalyses the reaction 5-(methylsulfanyl)-D-ribulose 1-phosphate = 5-methylsulfanyl-2,3-dioxopentyl phosphate + H2O. Its pathway is amino-acid biosynthesis; L-methionine biosynthesis via salvage pathway; L-methionine from S-methyl-5-thio-alpha-D-ribose 1-phosphate: step 2/6. Its function is as follows. Catalyzes the dehydration of methylthioribulose-1-phosphate (MTRu-1-P) into 2,3-diketo-5-methylthiopentyl-1-phosphate (DK-MTP-1-P). The chain is Methylthioribulose-1-phosphate dehydratase from Candida albicans (strain SC5314 / ATCC MYA-2876) (Yeast).